The following is a 120-amino-acid chain: Prophage bactoprenol-linked glucose translocase homolog (120 aa).

Residues 1 to 9 (MLKLFAKYT) are Cytoplasmic-facing. The helical transmembrane segment at 10-30 (SIGVLNTLIHWVVFGVCIYVA) threads the bilayer. At 31-33 (HTN) the chain is on the periplasmic side. The helical transmembrane segment at 34-54 (QALANFAGFVVAVSFSFFANA) threads the bilayer. At 55 to 64 (KFTFKASTTT) the chain is on the cytoplasmic side. The helical transmembrane segment at 65–85 (MRYMLYVGFMGTLSATVGWAA) threads the bilayer. The Periplasmic segment spans residues 86 to 88 (DRC). The chain crosses the membrane as a helical span at residues 89 to 109 (ALPPMITLVTFSAISLVCGFV). At 110–120 (YSKFIVFRDAK) the chain is on the cytoplasmic side.

Belongs to the GtrA family.

It localises to the cell inner membrane. Its function is as follows. Involved in O antigen modification. Involved in the translocation of bactoprenol-linked glucose across the cytoplasmic membrane. The polypeptide is Prophage bactoprenol-linked glucose translocase homolog (yfdG) (Escherichia coli (strain K12)).